Reading from the N-terminus, the 258-residue chain is Putative gamma-secretase subunit APH-1C (258 aa).

7 consecutive transmembrane segments (helical) span residues 5-25, 32-52, 71-91, 116-136, 161-181, 187-207, and 214-234; these read VFFG…LFTI, VIFL…SSMF, LLIF…LAYY, LLAY…SFVN, AFMT…FFDG, WYTL…TFLS, and LVTA…VAGG.

This sequence belongs to the APH-1 family. Potential component of the gamma-secretase complex.

It localises to the membrane. Its function is as follows. Potential subunit of the gamma-secretase complex, an endoprotease complex that catalyzes the intramembrane cleavage of integral proteins such as Notch receptors and APP (amyloid-beta precursor protein). This chain is Putative gamma-secretase subunit APH-1C (Aph1c), found in Mus musculus (Mouse).